Here is a 527-residue protein sequence, read N- to C-terminus: Estrogen receptor beta (527 aa).

The segment at 1–145 is modulating; that stretch reads MDVKNSPSSL…SPSSKRDAHF (145 aa). A phosphoserine; by MAPK mark is found at Ser84 and Ser102. 2 consecutive NR C4-type zinc fingers follow at residues 146–166 and 182–206; these read CAVC…CEGC and CPAT…LRKC. The nuclear receptor DNA-binding region spans 146 to 211; the sequence is CAVCSDYASG…RLRKCYEVGM (66 aa). The region spanning 261–495 is the NR LBD domain; sequence SPEQLVLTLL…DLLLEMLNAH (235 aa).

It belongs to the nuclear hormone receptor family. NR3 subfamily. As to quaternary structure, binds DNA as a homodimer. Can form a heterodimer with ESR1. Interacts with NCOA1, NCOA3, NCOA5 and NCOA6 coactivators, leading to a strong increase of transcription of target genes. Interacts with UBE1C and AKAP13. Interacts with DNTTIP2. Interacts with CCDC62 in the presence of estradiol/E2; this interaction seems to enhance the transcription of target genes. Interacts with DNAAF4. Interacts with PRMT2. Interacts with CCAR2 (via N-terminus) in a ligand-independent manner. Interacts with RBM39, in the presence of estradiol (E2). Interacts with STUB1/CHIP. Phosphorylation at Ser-84 and Ser-102 recruits NCOA1. Present in granulosa cells of antral follicles in various stages of follicular growth.

The protein localises to the nucleus. In terms of biological role, nuclear hormone receptor. Binds estrogens with an affinity similar to that of ESR1ESR1/ER-alpha, and activates expression of reporter genes containing estrogen response elements (ERE) in an estrogen-dependent manner. The chain is Estrogen receptor beta (ESR2) from Bos taurus (Bovine).